A 432-amino-acid polypeptide reads, in one-letter code: MLDIQQLRNDLDNVVARLSSRGFAFDINAFIALENERKTVQTRTQDLQAKRNATSKQIGIAKSRGEDVASIMAEVAGLGAQLKEGEERLAAIQAELQQLLLSVPNLPHESVPVGKSEEDNVEVRRVGTPRRFDFDVKDHTDIGTPLGLDFDTGAKLAGARFTLMRGQIARLHRALAQFMLDTQTEQHGYTECYTPYIVNADSLRGTGQLPKFEADLFAAQKGGQEGESNEAFYLIPTSEVTLTNTVRDEIVPLDSLPIKLTAHTPCFRSEAGSYGRDTRGMIRQHQFDKVEMVQITHPERSYDALEEMVGHAEHVLQALGLPYRVVLLCTGDMGFGAAKTYDLEVWLPAQNTYREISSVSNCEAFQARRLQARFRNENGKPELLHTLNGSGLAVGRTLVAVLENNQQADGSVVVPEVLRPYMGGLTVISAQQ.

L-serine is bound at residue 237 to 239 (TSE). 268–270 (RSE) is an ATP binding site. Glu291 contributes to the L-serine binding site. Position 355–358 (355–358 (EISS)) interacts with ATP. L-serine is bound at residue Ser390.

Belongs to the class-II aminoacyl-tRNA synthetase family. Type-1 seryl-tRNA synthetase subfamily. Homodimer. The tRNA molecule binds across the dimer.

The protein resides in the cytoplasm. It catalyses the reaction tRNA(Ser) + L-serine + ATP = L-seryl-tRNA(Ser) + AMP + diphosphate + H(+). The catalysed reaction is tRNA(Sec) + L-serine + ATP = L-seryl-tRNA(Sec) + AMP + diphosphate + H(+). The protein operates within aminoacyl-tRNA biosynthesis; selenocysteinyl-tRNA(Sec) biosynthesis; L-seryl-tRNA(Sec) from L-serine and tRNA(Sec): step 1/1. In terms of biological role, catalyzes the attachment of serine to tRNA(Ser). Is also able to aminoacylate tRNA(Sec) with serine, to form the misacylated tRNA L-seryl-tRNA(Sec), which will be further converted into selenocysteinyl-tRNA(Sec). In Methylobacillus flagellatus (strain ATCC 51484 / DSM 6875 / VKM B-1610 / KT), this protein is Serine--tRNA ligase.